The chain runs to 745 residues: MSDKPRRDTGSTGTGSGRSTGQSGSNRAVGAPNPGTGRSPNASTGGNRSAGNQAGNSGRPASAGRNQATTPAPNRNTPPAGARQGGAANARTGTPPVARGGGGGVTPPTGRGGNNPRAARNQPRSRQQPEEREREHVLRRPPPQPAARPVVRPRGPVALPPVMTVRELSEATGIGAADILKAMLKAGMLANINQQIDYETAALIMADFGIETTEDVPEQMAGIVEDVKEVLRAQPPEEMRPRPPVVTIMGHVDHGKTKLLDAIRSTRVAEGEAGGITQHIGAYQIEVNHRKITFLDTPGHEAFTAMRARGAQVTDIVVLVVAADDGVKPQTEEAIAHVKAAGVPMIVAINKIDLPTANPDRIKQQLANVGVIVEEYGGNVPCVHVSARQKINIDGLLEMILLVADLEDLRANPNAPAVGTIIEAKLDKSRGPVATVLIQNGTLHLEDNVLVGCVAGKIKSMFSDSGKRLRHAEPSTPVEIVGLEGVPQAGDILQVMDDLVVAREIALQRQRQQRAEVMAAAARGTSLEELFGKVKQGQVKELNLILKADVQGSLDAIAHLIEQLNQSQQAVQTRIIHRGVGAITEGDVNLALASHAIIIGFNARPDPAARRHAEQHGIDIRFYNIIYQLQDDLKKAMAGMLAPTVKEVVEGYAEVRNTFRLPTREVVAGVYVSDGKITRTGQNVRVLRRGVVIHDGKISSLKRFKDDVREVTAGYECGLIVEGFNDIEVGDALEFYRQETVAASL.

The tract at residues 1-154 (MSDKPRRDTG…PAARPVVRPR (154 aa)) is disordered. Residues 36–56 (TGRSPNASTGGNRSAGNQAGN) show a composition bias toward polar residues. Over residues 68–98 (ATTPAPNRNTPPAGARQGGAANARTGTPPVA) the composition is skewed to low complexity. Over residues 99–113 (RGGGGGVTPPTGRGG) the composition is skewed to gly residues. Residues 114–126 (NNPRAARNQPRSR) are compositionally biased toward low complexity. The span at 127–138 (QQPEEREREHVL) shows a compositional bias: basic and acidic residues. Residues 241-410 (PRPPVVTIMG…LLVADLEDLR (170 aa)) enclose the tr-type G domain. Positions 250–257 (GHVDHGKT) are G1. Position 250-257 (250-257 (GHVDHGKT)) interacts with GTP. Residues 275 to 279 (GITQH) form a G2 region. The tract at residues 296-299 (DTPG) is G3. GTP contacts are provided by residues 296 to 300 (DTPGH) and 350 to 353 (NKID). Residues 350 to 353 (NKID) form a G4 region. Positions 386–388 (SAR) are G5.

It belongs to the TRAFAC class translation factor GTPase superfamily. Classic translation factor GTPase family. IF-2 subfamily.

The protein localises to the cytoplasm. One of the essential components for the initiation of protein synthesis. Protects formylmethionyl-tRNA from spontaneous hydrolysis and promotes its binding to the 30S ribosomal subunits. Also involved in the hydrolysis of GTP during the formation of the 70S ribosomal complex. The polypeptide is Translation initiation factor IF-2 (Chloroflexus aurantiacus (strain ATCC 29366 / DSM 635 / J-10-fl)).